Consider the following 517-residue polypeptide: AAA ATPase forming ring-shaped complexes (517 aa).

A coiled-coil region spans residues 25-53; sequence ARNAKLVELLQASRTKLEEINGRLEALAE. 233-238 lines the ATP pocket; the sequence is GNGKTL.

Belongs to the AAA ATPase family. As to quaternary structure, homohexamer. Assembles into a hexameric ring structure.

The polypeptide is AAA ATPase forming ring-shaped complexes (Corynebacterium jeikeium (strain K411)).